Here is a 320-residue protein sequence, read N- to C-terminus: Ferrochelatase (320 aa).

Positions 194 and 275 each coordinate Fe cation.

This sequence belongs to the ferrochelatase family. In terms of assembly, monomer.

It is found in the cytoplasm. The catalysed reaction is heme b + 2 H(+) = protoporphyrin IX + Fe(2+). It participates in porphyrin-containing compound metabolism; protoheme biosynthesis; protoheme from protoporphyrin-IX: step 1/1. Catalyzes the ferrous insertion into protoporphyrin IX. The polypeptide is Ferrochelatase (Salmonella typhi).